A 242-amino-acid chain; its full sequence is Type III pantothenate kinase (242 aa).

An ATP-binding site is contributed by 6-13 (DIGNSVAK). Substrate contacts are provided by residues Tyr86 and 93–96 (GMDR). Asp95 (proton acceptor) is an active-site residue. Asp116 serves as a coordination point for K(+). Thr119 lines the ATP pocket. Thr171 contacts substrate.

Belongs to the type III pantothenate kinase family. In terms of assembly, homodimer. NH4(+) is required as a cofactor. Requires K(+) as cofactor.

It localises to the cytoplasm. It carries out the reaction (R)-pantothenate + ATP = (R)-4'-phosphopantothenate + ADP + H(+). The protein operates within cofactor biosynthesis; coenzyme A biosynthesis; CoA from (R)-pantothenate: step 1/5. Functionally, catalyzes the phosphorylation of pantothenate (Pan), the first step in CoA biosynthesis. The protein is Type III pantothenate kinase of Phocaeicola vulgatus (strain ATCC 8482 / DSM 1447 / JCM 5826 / CCUG 4940 / NBRC 14291 / NCTC 11154) (Bacteroides vulgatus).